A 256-amino-acid chain; its full sequence is 7-cyano-7-deazaguanine synthase (256 aa).

The tract at residues 1-22 (MTDASADALTSPSNSGASQDTS) is disordered. Polar residues predominate over residues 8–22 (ALTSPSNSGASQDTS). An ATP-binding site is contributed by 30-40 (LSGGLDSVTCL). Residues C220, C230, C233, and C236 each coordinate Zn(2+).

This sequence belongs to the QueC family. The cofactor is Zn(2+).

It catalyses the reaction 7-carboxy-7-deazaguanine + NH4(+) + ATP = 7-cyano-7-deazaguanine + ADP + phosphate + H2O + H(+). Its pathway is purine metabolism; 7-cyano-7-deazaguanine biosynthesis. In terms of biological role, catalyzes the ATP-dependent conversion of 7-carboxy-7-deazaguanine (CDG) to 7-cyano-7-deazaguanine (preQ(0)). The chain is 7-cyano-7-deazaguanine synthase from Psychrobacter sp. (strain PRwf-1).